The following is a 365-amino-acid chain: Caffeic acid 3-O-methyltransferase (365 aa).

Position 131 (Asn131) interacts with (E)-ferulate. S-adenosyl-L-homocysteine-binding residues include Gly208, Asp231, Asp251, Met252, Met264, and Lys265. The active-site Proton acceptor is the His269. A (E)-5-hydroxyferulate-binding site is contributed by Asp270. Residues Glu297 and Glu329 contribute to the active site.

Belongs to the class I-like SAM-binding methyltransferase superfamily. Cation-independent O-methyltransferase family. COMT subfamily. In terms of assembly, homodimer. In terms of tissue distribution, more abundant in roots and stems.

The catalysed reaction is (E)-caffeate + S-adenosyl-L-methionine = (E)-ferulate + S-adenosyl-L-homocysteine + H(+). It catalyses the reaction (E)-5-hydroxyferulate + S-adenosyl-L-methionine = (E)-sinapate + S-adenosyl-L-homocysteine + H(+). Its pathway is aromatic compound metabolism; phenylpropanoid biosynthesis. Its function is as follows. Catalyzes the conversion of caffeic acid to ferulic acid and of 5-hydroxyferulic acid to sinapic acid. The resulting products may subsequently be converted to the corresponding alcohols that are incorporated into lignins. The sequence is that of Caffeic acid 3-O-methyltransferase from Medicago sativa (Alfalfa).